A 362-amino-acid chain; its full sequence is H-2 class I histocompatibility antigen, D-K alpha chain (362 aa).

A signal peptide spans 1–24; sequence MGAMVPRTLLLLLAAALAPAQTRA. The alpha-1 stretch occupies residues 25–114; that stretch reads GPHSLRYFET…LLRYYNQSEG (90 aa). Residues 25–306 are Extracellular-facing; it reads GPHSLRYFET…RWEPPPSTDS (282 aa). An N-linked (GlcNAc...) asparagine glycan is attached at N110. The segment at 115 to 206 is alpha-2; the sequence is GSHTIQRLSG…ELGNATLLHT (92 aa). A disulfide bridge links C125 with C188. 2 N-linked (GlcNAc...) asparagine glycosylation sites follow: N200 and N280. Positions 207-298 are alpha-3; it reads DSPKAHVTHH…GLPEPLTLRW (92 aa). The Ig-like C1-type domain maps to 209–297; that stretch reads PKAHVTHHPR…EGLPEPLTLR (89 aa). The cysteines at positions 227 and 283 are disulfide-linked. The connecting peptide stretch occupies residues 299-306; sequence EPPPSTDS. The helical transmembrane segment at 307-333 threads the bilayer; that stretch reads YMVIVAVLGVLGAVAIIGAVVAFVMMM. Over 334 to 362 the chain is Cytoplasmic; it reads RRNTGGKGGDYTLTPGSQSSEMSLPDCKA. The interval 340 to 362 is disordered; that stretch reads KGGDYTLTPGSQSSEMSLPDCKA. Phosphoserine occurs at positions 353 and 356.

It belongs to the MHC class I family. Heterodimer of an alpha chain and a beta chain (beta-2-microglobulin). In terms of processing, polyubiquitinated in case of infection by murid herpesvirus 4, by the viral E3 ligase K3 (mK3), leading to target the protein for rapid degradation by the endoplasmic reticulum-associated degradation (ERAD) system. Ubiquitination takes place on lysine, as well as serine and threonine residues present in the cytoplasmic tail. Hydroxylated serine and threonine residues in the cytoplasmic tail are subject to ubiquitination via ester bonds instead of the classical isopeptide linkage. Post-translationally, hydroxylation of residues in the cytoplasmic tail.

The protein resides in the membrane. Its function is as follows. Involved in the presentation of foreign antigens to the immune system. The sequence is that of H-2 class I histocompatibility antigen, D-K alpha chain (H2-D1) from Mus musculus (Mouse).